The primary structure comprises 826 residues: MERIKHAATNSSLDRDGMAAVVDMYATWCGYLRRCAMDPNASDESVDLADSGLVAALEAVQVWGERRFGSAFQGDPNYRLERIMIYHLTEKHGAIDEAREHWDKLAQKELLAHDYSFWLSYYMWEMNLLQSQKGTGRSPTPAPAARLSRTPSRPASILQRALQVSQLNWPERVIEIYVKHCNDFESSDVLQNALDEVHNLQRVIAQRRKDATAAQTAQAEAHARAYESQALEASAAAAEAQALGKQQTGDPQDDLNAGVKRKWEAIASGETPESATKKPKNEDIGVNAAAPNSDQKSQENQPAKRDRENTSVFVSNLPSDVTITKVRQYFREYGHVNNIQLKHEENGKSTVALVEFRSVEDAQTALIRDGKYFGDHTISVKEAAGITLYVTNFPPSTDDESLHRLFGKSSNIFGIRWPSLKYNAHRRFCYVSFRDAESAAKATGLHGKMLEGKYKLSVQYSDPAAKKAREGATDEGREVHIKNIPQEFDEKEIEQLVSKYGTVKRVRLLHNMAGRSRGSAFVDLETKDEAERVVAELDKVKLGTQILKVELSVSAKFKPSARETSVASESATCNGGQEAPDEAKGEAGNEARGNLHLRSFALLGIPDTVNITRVRSLAEPHGHITKLKLYPEHGGAIIEYEDETTAGKAQLALDSTQLEGHTLRVDAVPQLFKEKSGVRIDRVDIAKRRPPKPTADTTSATMGKKAAPTTAPALLPAFVRRPVLGGKGVKHGLGFSAISATTSTKKDGQPTATNGAATSSTSSDTAPKKSNADFRALFLAGKSSTDSKEKVSEEKSKASGAPASVDKPDSKPDDTKMEIDVVVNGH.

RRM domains are found at residues 310–385 (TSVF…EAAG), 386–463 (ITLY…YSDP), 477–554 (REVH…LSVS), and 598–670 (RSFA…AVPQ).

The protein resides in the nucleus. Functionally, functions as a recycling factor of the spliceosome, a machinery that forms on each precursor-messenger RNA (pre-mRNA) and catalyzes the removal of introns. Chaperones the re-annealing of U4 and U6 snRNAs (small nuclear RNAs) released from previous rounds of splicing, an initial step in reforming the U4/U6-U5 tri-snRNP (small nuclear ribonucleoprotein) that can reassemble into another spliceosome complex; this step involves binding U6 and facilitating the unwinding of the U6 internal stem loop, followed by base-pairing of U6 to U4. The protein is U4/U6 snRNA-associated-splicing factor PRP24 of Ophiostoma ulmi (Dutch elm disease fungus).